Reading from the N-terminus, the 353-residue chain is Protein RecA (353 aa).

Residue 67–74 (GPESSGKT) participates in ATP binding. The disordered stretch occupies residues 330–353 (SNPNSTPDFSVDDSEGVAETNEDF). Acidic residues predominate over residues 339–353 (SVDDSEGVAETNEDF).

This sequence belongs to the RecA family.

It is found in the cytoplasm. Its function is as follows. Can catalyze the hydrolysis of ATP in the presence of single-stranded DNA, the ATP-dependent uptake of single-stranded DNA by duplex DNA, and the ATP-dependent hybridization of homologous single-stranded DNAs. It interacts with LexA causing its activation and leading to its autocatalytic cleavage. This is Protein RecA from Shigella sonnei.